The sequence spans 246 residues: UPF0309 protein OB3413 (246 aa).

The SIS domain maps to 33-212 (MATAVMNGNS…VLKMIEIFEE (180 aa)).

This sequence belongs to the UPF0309 family.

The sequence is that of UPF0309 protein OB3413 from Oceanobacillus iheyensis (strain DSM 14371 / CIP 107618 / JCM 11309 / KCTC 3954 / HTE831).